The sequence spans 461 residues: Cysteine--tRNA ligase (461 aa).

Cys28 lines the Zn(2+) pocket. The short motif at 30-40 is the 'HIGH' region element; it reads ITVYDLCHIGH. Residues Cys209, His234, and Glu238 each contribute to the Zn(2+) site. Residues 266–270 carry the 'KMSKS' region motif; that stretch reads KMSKS. Residue Lys269 coordinates ATP.

The protein belongs to the class-I aminoacyl-tRNA synthetase family. Monomer. Requires Zn(2+) as cofactor.

The protein resides in the cytoplasm. It catalyses the reaction tRNA(Cys) + L-cysteine + ATP = L-cysteinyl-tRNA(Cys) + AMP + diphosphate. The protein is Cysteine--tRNA ligase of Escherichia coli (strain K12 / MC4100 / BW2952).